The following is a 37-amino-acid chain: Cytochrome b6-f complex subunit 5 (37 aa).

Residues 5–25 traverse the membrane as a helical segment; it reads LLCGIVLGLVPVTIAGLFVTA.

Belongs to the PetG family. The 4 large subunits of the cytochrome b6-f complex are cytochrome b6, subunit IV (17 kDa polypeptide, PetD), cytochrome f and the Rieske protein, while the 4 small subunits are PetG, PetL, PetM and PetN. The complex functions as a dimer.

It localises to the plastid. The protein localises to the chloroplast thylakoid membrane. In terms of biological role, component of the cytochrome b6-f complex, which mediates electron transfer between photosystem II (PSII) and photosystem I (PSI), cyclic electron flow around PSI, and state transitions. PetG is required for either the stability or assembly of the cytochrome b6-f complex. The protein is Cytochrome b6-f complex subunit 5 of Chlamydomonas reinhardtii (Chlamydomonas smithii).